A 197-amino-acid chain; its full sequence is Imidazoleglycerol-phosphate dehydratase (197 aa).

Belongs to the imidazoleglycerol-phosphate dehydratase family.

Its subcellular location is the cytoplasm. It catalyses the reaction D-erythro-1-(imidazol-4-yl)glycerol 3-phosphate = 3-(imidazol-4-yl)-2-oxopropyl phosphate + H2O. The protein operates within amino-acid biosynthesis; L-histidine biosynthesis; L-histidine from 5-phospho-alpha-D-ribose 1-diphosphate: step 6/9. In Pseudomonas fluorescens (strain ATCC BAA-477 / NRRL B-23932 / Pf-5), this protein is Imidazoleglycerol-phosphate dehydratase.